Consider the following 362-residue polypeptide: tRNA/tmRNA (uracil-C(5))-methyltransferase (362 aa).

S-adenosyl-L-methionine contacts are provided by Gln-182, Tyr-210, Asn-215, Glu-231, and Asp-293. The Nucleophile role is filled by Cys-318. Catalysis depends on Glu-352, which acts as the Proton acceptor.

Belongs to the class I-like SAM-binding methyltransferase superfamily. RNA M5U methyltransferase family. TrmA subfamily.

It catalyses the reaction uridine(54) in tRNA + S-adenosyl-L-methionine = 5-methyluridine(54) in tRNA + S-adenosyl-L-homocysteine + H(+). It carries out the reaction uridine(341) in tmRNA + S-adenosyl-L-methionine = 5-methyluridine(341) in tmRNA + S-adenosyl-L-homocysteine + H(+). In terms of biological role, dual-specificity methyltransferase that catalyzes the formation of 5-methyluridine at position 54 (m5U54) in all tRNAs, and that of position 341 (m5U341) in tmRNA (transfer-mRNA). In Neisseria meningitidis serogroup A / serotype 4A (strain DSM 15465 / Z2491), this protein is tRNA/tmRNA (uracil-C(5))-methyltransferase.